The following is a 436-amino-acid chain: Trigger factor (436 aa).

A PPIase FKBP-type domain is found at 161-246 (DLRVNMDFVG…LNKVEKQDLP (86 aa)).

This sequence belongs to the FKBP-type PPIase family. Tig subfamily.

The protein localises to the cytoplasm. The catalysed reaction is [protein]-peptidylproline (omega=180) = [protein]-peptidylproline (omega=0). Involved in protein export. Acts as a chaperone by maintaining the newly synthesized protein in an open conformation. Functions as a peptidyl-prolyl cis-trans isomerase. The sequence is that of Trigger factor from Tolumonas auensis (strain DSM 9187 / NBRC 110442 / TA 4).